The primary structure comprises 806 residues: Leucine--tRNA ligase (806 aa).

A 'HIGH' region motif is present at residues 40-51 (PYPSGTGLHVGH). Residues 576–580 (KMSKS) carry the 'KMSKS' region motif. ATP is bound at residue lysine 579.

The protein belongs to the class-I aminoacyl-tRNA synthetase family.

Its subcellular location is the cytoplasm. The catalysed reaction is tRNA(Leu) + L-leucine + ATP = L-leucyl-tRNA(Leu) + AMP + diphosphate. This is Leucine--tRNA ligase from Prosthecochloris aestuarii (strain DSM 271 / SK 413).